A 332-amino-acid polypeptide reads, in one-letter code: MQTILEKLYRSESMNQQESQQLFSAIVRGELEPSQLAAALISMKIRGEHPEEIAGAAKALLADALPFPRPDYPFADIVGTGGDGTNSINISTASAFVAAACGAKVAKHGNRSVSSRSGSSDLLAAFGIRLDLPAEEARKALDELGVCFLFAPQYHTGFRHAMPVRQQLKTRTVFNVLGPLINPARPPLALIGVYSPELVLPIAETLRVLGYQRAAVVHGGGMDEVAIHATTHVAELNNGEIESYQLTPQSFGLQSYPLEALLGGSPEENRDILARLLQGKGDPAHAAAVAANVALLLKLFGHEDLRQNAQQALDMIHSGQAYERVTALAARG.

5-phospho-alpha-D-ribose 1-diphosphate contacts are provided by residues G79, 82–83, S87, 89–92, 107–115, and S119; these read GD, NIST, and KHGNRSVSS. Residue G79 coordinates anthranilate. S91 contacts Mg(2+). Residue N110 coordinates anthranilate. Position 165 (R165) interacts with anthranilate. 2 residues coordinate Mg(2+): D223 and E224.

This sequence belongs to the anthranilate phosphoribosyltransferase family. In terms of assembly, homodimer. It depends on Mg(2+) as a cofactor.

The catalysed reaction is N-(5-phospho-beta-D-ribosyl)anthranilate + diphosphate = 5-phospho-alpha-D-ribose 1-diphosphate + anthranilate. Its pathway is amino-acid biosynthesis; L-tryptophan biosynthesis; L-tryptophan from chorismate: step 2/5. Its function is as follows. Catalyzes the transfer of the phosphoribosyl group of 5-phosphorylribose-1-pyrophosphate (PRPP) to anthranilate to yield N-(5'-phosphoribosyl)-anthranilate (PRA). In Serratia proteamaculans (strain 568), this protein is Anthranilate phosphoribosyltransferase.